A 657-amino-acid polypeptide reads, in one-letter code: tRNA 5-methylaminomethyl-2-thiouridine biosynthesis bifunctional protein MnmC (657 aa).

The segment at 1 to 239 is tRNA (mnm(5)s(2)U34)-methyltransferase; it reads MTDRIVPATL…KRAMLVGEFA (239 aa). Residues 263–657 are FAD-dependent cmnm(5)s(2)U34 oxidoreductase; it reads IGAGLAGCAV…VRALRHGRVA (395 aa).

It in the N-terminal section; belongs to the methyltransferase superfamily. tRNA (mnm(5)s(2)U34)-methyltransferase family. In the C-terminal section; belongs to the DAO family. FAD serves as cofactor.

The protein resides in the cytoplasm. The catalysed reaction is 5-aminomethyl-2-thiouridine(34) in tRNA + S-adenosyl-L-methionine = 5-methylaminomethyl-2-thiouridine(34) in tRNA + S-adenosyl-L-homocysteine + H(+). Catalyzes the last two steps in the biosynthesis of 5-methylaminomethyl-2-thiouridine (mnm(5)s(2)U) at the wobble position (U34) in tRNA. Catalyzes the FAD-dependent demodification of cmnm(5)s(2)U34 to nm(5)s(2)U34, followed by the transfer of a methyl group from S-adenosyl-L-methionine to nm(5)s(2)U34, to form mnm(5)s(2)U34. The sequence is that of tRNA 5-methylaminomethyl-2-thiouridine biosynthesis bifunctional protein MnmC from Burkholderia pseudomallei (strain 668).